Reading from the N-terminus, the 414-residue chain is Putative competence-damage inducible protein (414 aa).

The protein belongs to the CinA family.

The chain is Putative competence-damage inducible protein from Clostridium novyi (strain NT).